The sequence spans 632 residues: Glycerophosphodiester phosphodiesterase domain-containing protein 4 (632 aa).

The Cytoplasmic portion of the chain corresponds to 1–64 (MEETQDSSSS…GSCCCSRKEQ (64 aa)). A helical transmembrane segment spans residues 65-85 (FFYMCLVIAFILSVLFLFVWV). The Extracellular segment spans residues 86-114 (ETSNEYNGFDWVVYLGTGCWFFWSILVLS). Residues 115–135 (AAGIMVAYTTLLLLLGFLLLW) traverse the membrane as a helical segment. The Cytoplasmic segment spans residues 136–147 (ERIELNLHTSHK). A helical transmembrane segment spans residues 148–168 (VFICLVIVLCSFLLAVLSHFW). Residues 169–180 (KDKWLIAGLSLQ) lie on the Extracellular side of the membrane. Residues 181–201 (IFAPFVHLSLITVMIIISWPL) traverse the membrane as a helical segment. Residues 202-240 (SICVARLESEVKVRRYRMADYEQEIQERCNVFQRLRALQ) are Cytoplasmic-facing. Residues 241–261 (IAAGLSFLIILLCLYLMPLGI) form a helical membrane-spanning segment. The Extracellular portion of the chain corresponds to 262–542 (YSPCILKKEN…SRPLFFMTPG (281 aa)). The GP-PDE domain maps to 276–533 (PTLFGHRGAP…DNIELLNQLS (258 aa)). The a divalent metal cation site is built by Glu-308, Asp-310, and His-323. 4 N-linked (GlcNAc...) asparagine glycosylation sites follow: Asn-343, Asn-349, Asn-384, and Asn-473. Residues 543–563 (FYMFMWLFLDIASAVIIGFVF) form a helical membrane-spanning segment. The Cytoplasmic segment spans residues 564 to 632 (CYNWIKEIKR…QKTEPKTENL (69 aa)). Positions 596 to 632 (ENNDASQQKPEVAPTSANLAPENMIELQKTEPKTENL) are disordered. Basic and acidic residues predominate over residues 623–632 (QKTEPKTENL).

It belongs to the glycerophosphoryl diester phosphodiesterase family. Detected in testis, in particular in spermatocytes.

It localises to the cytoplasm. The protein localises to the membrane. The protein is Glycerophosphodiester phosphodiesterase domain-containing protein 4 (Gdpd4) of Mus musculus (Mouse).